A 220-amino-acid chain; its full sequence is MSLLANDEVYDIVSGFKKVIESAKANFCESVDVAINLNINSSKSDEQVRGAVVLPKGLGREVKVAVFAKGGHLDAAKEAMADIVGDEELIEEIKRKKCKLDVDWCLTTPDFMSSVSSIAKILGPRGLMPNPKFNTVTFELSKAIKVIKSGQIRFKSDKAGIVHAKIGNVKFSIEDLLQNFNAVIGAIKQSKPASVKGVYFKDVFIVSTMGKSVKVESLNN.

Belongs to the universal ribosomal protein uL1 family. Part of the 50S ribosomal subunit.

In terms of biological role, binds directly to 23S rRNA. The L1 stalk is quite mobile in the ribosome, and is involved in E site tRNA release. Functionally, protein L1 is also a translational repressor protein, it controls the translation of the L11 operon by binding to its mRNA. In Ehrlichia ruminantium (strain Gardel), this protein is Large ribosomal subunit protein uL1.